The sequence spans 150 residues: Con-Ins Im1 (150 aa).

The first 25 residues, 1–25 (MATSLLSPLLVAMLGFLLHVHVARA), serve as a signal peptide directing secretion. Intrachain disulfides connect cysteine 31-cysteine 133, cysteine 46-cysteine 136, cysteine 58-cysteine 149, and cysteine 135-cysteine 140. Residues 64-111 (GYAGGQRQLRKRTSMIDSDDMEAEGGSRGGFLMSKRRALSYLQKETNP) constitute a propeptide, c peptide. Glutamate 144 is subject to 4-carboxyglutamate; partial.

The protein belongs to the insulin family. In terms of assembly, heterodimer of A and B chains; disulfide-linked. In terms of tissue distribution, expressed by the venom gland.

The protein resides in the secreted. Its function is as follows. This venom insulin facilitates prey capture by rapidly inducing hypoglycemic shock. Intraperitoneal injection of this peptide into zebrafish lowers blood glucose with the same potency than human insulin. In vivo, when applied to water, this peptide reduces overall locomotor activity of zebrafish larvae, observed as a significant decrease in the percentage of time spent swimming and movement frequency. The polypeptide is Con-Ins Im1 (Conus imperialis (Imperial cone)).